The sequence spans 177 residues: Immunity protein CdiI-YPIII (177 aa).

Interacts with the C-terminal DNase fragment (residues 954-1077) of cognate toxin CdiA-YPIII.

Immunity protein component of a toxin-immunity protein module, which functions as a cellular contact-dependent growth inhibition (CDI) system. CDI modules allow bacteria to communicate with and inhibit the growth of closely related neighboring bacteria in a contact-dependent fashion. Neutralizes the toxic activity of cognate toxin CdiA-YPIII (residues 954-1077). Does not inhibit toxic activity of CdiA from other toxin-immunity modules. The chain is Immunity protein CdiI-YPIII from Yersinia pseudotuberculosis serotype O:3 (strain YPIII).